Here is a 257-residue protein sequence, read N- to C-terminus: Pyridoxine/pyridoxamine 5'-phosphate oxidase (257 aa).

Residue 33-36 coordinates substrate; that stretch reads RIKY. 90–93 is a binding site for FMN; it reads RFVL. Lysine 95 serves as a coordination point for pyridoxal 5'-phosphate. FMN contacts are provided by residues 105-106 and lysine 112; that span reads YT. Tyrosine 152, arginine 156, and serine 160 together coordinate pyridoxal 5'-phosphate. Residues 169-170 and tryptophan 216 contribute to the FMN site; that span reads QS. Substrate is bound at residue 222 to 224; it reads RLH. Arginine 226 contributes to the FMN binding site.

It belongs to the pyridoxamine 5'-phosphate oxidase family. Homodimer. FMN serves as cofactor. In terms of tissue distribution, expressed in silk gland and fat body of the larva.

The enzyme catalyses pyridoxamine 5'-phosphate + O2 + H2O = pyridoxal 5'-phosphate + H2O2 + NH4(+). It catalyses the reaction pyridoxine 5'-phosphate + O2 = pyridoxal 5'-phosphate + H2O2. Its pathway is cofactor metabolism; pyridoxal 5'-phosphate salvage; pyridoxal 5'-phosphate from pyridoxamine 5'-phosphate: step 1/1. It participates in cofactor metabolism; pyridoxal 5'-phosphate salvage; pyridoxal 5'-phosphate from pyridoxine 5'-phosphate: step 1/1. Catalyzes the oxidation of either pyridoxine 5'-phosphate (PNP) or pyridoxamine 5'-phosphate (PMP) into pyridoxal 5'-phosphate (PLP). The sequence is that of Pyridoxine/pyridoxamine 5'-phosphate oxidase from Bombyx mori (Silk moth).